The primary structure comprises 69 residues: uncharacterized protein (69 aa).

Over 1 to 15 (MLLYIVIIVACIISK) the chain is Cytoplasmic. The chain crosses the membrane as a helical span at residues 16 to 36 (LVPNEYWAIHLFFIIMIFMVY). The Extracellular portion of the chain corresponds to 37–69 (MYEKLDIHQKYQFWNYTMSGLSGHNVQVICKCY). N-linked (GlcNAc...) asparagine; by host glycosylation is present at asparagine 51.

It belongs to the asfivirus X69R family.

It is found in the host membrane. This is an uncharacterized protein from Ornithodoros (relapsing fever ticks).